The primary structure comprises 833 residues: MHLLPRETDKLILTTLGTLAQRRLARGLILNRAETIALISSQLQEFVRDGRHSVAELMDLGKKMLGRRHVRKGVPESIHTIQVEGTFPDGVFLVTVDDPISSDDGDLNNAFYGSFLPIPSADVFPAAPEPADTLLGALICRKETVKINASRRRFRLEVKNAGDRPVQVGSHYHFLETNPALIFDRLLSYGYHLDIPAGTAVRFEPGEKKTVTMVEFGGKKIFHGGSGLGNGSFDENLRETKVKEMVEKGGFGHKEQEKIEEGPVTEMNREVYASMFGPTTGDKIKLADMDLWIEVEKDYTVYGDECKFGGGKVIRDGGGQASGRHDHEVLDLVITNALIVDWTGIYKADIGVKNGIIVGIGKAGNPDMMDGVTDGMIVGSSTEVISGEKLITTAGALDVHVHYISPQLMTEALASGITTVIGGGTGPADGSNATTCTSSSFYMQNMIKATDTIPLNFGFTGKGSDSGTNAMRDIIEAGACGLKVHEDWGATPEVIDRALSMADEYDVQINLHSDTLNESGYVESTLAAIKGRTIHSYHTEGAGGGHAPDIIVVCEYENVLPSSTNPTRPYAVNTLDEHLDMLMICHGLDKSIPEDIAFADSRIRSETVAAEDVLQDTGAISMISSDCQAMGRIGEVVTRTWRTAAKMKQFRGPLEGDEPTRDNNRVKRYVAKYTINPAITHGMSHLIGQVAVGCLADLVFWTAESFGARPEMILKGGVIAWAAVGDANASIPTVQPVLGRPMWGSQPEAAALNSIVWVSQASLDKDLVKRFNIKKRAEAVKNCRSIGKKDMKWNDTMPKMTVDPETYDVRADGVLCDVPPADKLPLTRRYFVY.

The Urease domain occupies 395 to 833; it reads GALDVHVHYI…LPLTRRYFVY (439 aa). The Ni(2+) site is built by histidine 400 and histidine 402. Urea is bound by residues histidine 402 and alanine 433. Residue lysine 483 participates in Ni(2+) binding. At lysine 483 the chain carries N6-carboxylysine. The urea site is built by histidine 485 and histidine 512. Positions 512 and 538 each coordinate Ni(2+). The active-site Proton donor is histidine 586. Aspartate 626 serves as a coordination point for Ni(2+). Alanine 629 is a binding site for urea.

This sequence in the C-terminal section; belongs to the metallo-dependent hydrolases superfamily. Urease alpha subunit family. Homohexamer. It depends on Ni(2+) as a cofactor. Carboxylation allows a single lysine to coordinate two nickel ions.

The enzyme catalyses urea + 2 H2O + H(+) = hydrogencarbonate + 2 NH4(+). It functions in the pathway nitrogen metabolism; urea degradation; CO(2) and NH(3) from urea (urease route): step 1/1. Its activity is regulated as follows. The urease accessory proteins URE4, URE6 and URE7 are required for urease activity, URE7 supplying nickel for the functional urease. In terms of biological role, plays a nutritional role via nitrogen acquisition in the environment. Contributes to the central nervous system invasion by enhancing yeast sequestration within microcapillary beds (such as within the brain) during hematogenous spread, thereby facilitating blood-to-brain invasion by C.neoformans. Affects fitness within the mammalian phagosome, promoting non-lytic exocytosis while delaying intracellular replication and thus reducing phagolysosomal membrane damage, events that could facilitate cryptococcal dissemination when transported inside macrophages. Urease activity is also associated with the regulation of key intracellular metabolic pathways, including melanin biosynthesis, polyamine biosynthesis, as well as intracellular levels of proline and reactive oxygen species. This is Urease from Cryptococcus neoformans var. grubii serotype A (strain H99 / ATCC 208821 / CBS 10515 / FGSC 9487) (Filobasidiella neoformans var. grubii).